The primary structure comprises 263 residues: Uroporphyrinogen-III C-methyltransferase (263 aa).

Residues Pro20, 96–98 (GGD), 126–127 (TA), Met180, and Ala237 contribute to the S-adenosyl-L-homocysteine site.

This sequence belongs to the precorrin methyltransferase family.

It catalyses the reaction uroporphyrinogen III + 2 S-adenosyl-L-methionine = precorrin-2 + 2 S-adenosyl-L-homocysteine + H(+). Its pathway is cofactor biosynthesis; adenosylcobalamin biosynthesis; precorrin-2 from uroporphyrinogen III: step 1/1. It functions in the pathway porphyrin-containing compound metabolism; siroheme biosynthesis; precorrin-2 from uroporphyrinogen III: step 1/1. Catalyzes the two successive C-2 and C-7 methylation reactions involved in the conversion of uroporphyrinogen III to precorrin-2 via the intermediate formation of precorrin-1. It is a step in the biosynthesis of both cobalamin (vitamin B12) and siroheme. The polypeptide is Uroporphyrinogen-III C-methyltransferase (cobA) (Synechocystis sp. (strain ATCC 27184 / PCC 6803 / Kazusa)).